The chain runs to 414 residues: uncharacterized protein (414 aa).

A disordered region spans residues 204-230 (LVGTPAPGPNGSNSDGDSERASQDVRD). Basic and acidic residues predominate over residues 220 to 230 (DSERASQDVRD).

It belongs to the CdaR family.

This is an uncharacterized protein from Mycobacterium tuberculosis (strain CDC 1551 / Oshkosh).